A 155-amino-acid chain; its full sequence is Ribosomal RNA large subunit methyltransferase H (155 aa).

S-adenosyl-L-methionine contacts are provided by residues L73, G104, and 123 to 128 (LSALTL).

Belongs to the RNA methyltransferase RlmH family. In terms of assembly, homodimer.

The protein localises to the cytoplasm. It carries out the reaction pseudouridine(1915) in 23S rRNA + S-adenosyl-L-methionine = N(3)-methylpseudouridine(1915) in 23S rRNA + S-adenosyl-L-homocysteine + H(+). Specifically methylates the pseudouridine at position 1915 (m3Psi1915) in 23S rRNA. This Saccharophagus degradans (strain 2-40 / ATCC 43961 / DSM 17024) protein is Ribosomal RNA large subunit methyltransferase H.